The chain runs to 391 residues: Phosphoglycerate kinase (391 aa).

Substrate contacts are provided by residues Asp21–Asn23, Arg36, His59–Arg62, Arg114, and Arg147. ATP-binding positions include Lys198, Glu315, and Gly344–Thr347.

The protein belongs to the phosphoglycerate kinase family. Monomer.

Its subcellular location is the cytoplasm. The enzyme catalyses (2R)-3-phosphoglycerate + ATP = (2R)-3-phospho-glyceroyl phosphate + ADP. It participates in carbohydrate degradation; glycolysis; pyruvate from D-glyceraldehyde 3-phosphate: step 2/5. The polypeptide is Phosphoglycerate kinase (Actinobacillus succinogenes (strain ATCC 55618 / DSM 22257 / CCUG 43843 / 130Z)).